The sequence spans 178 residues: ATP synthase subunit delta (178 aa).

Belongs to the ATPase delta chain family. As to quaternary structure, F-type ATPases have 2 components, F(1) - the catalytic core - and F(0) - the membrane proton channel. F(1) has five subunits: alpha(3), beta(3), gamma(1), delta(1), epsilon(1). F(0) has three main subunits: a(1), b(2) and c(10-14). The alpha and beta chains form an alternating ring which encloses part of the gamma chain. F(1) is attached to F(0) by a central stalk formed by the gamma and epsilon chains, while a peripheral stalk is formed by the delta and b chains.

The protein localises to the cell membrane. In terms of biological role, f(1)F(0) ATP synthase produces ATP from ADP in the presence of a proton or sodium gradient. F-type ATPases consist of two structural domains, F(1) containing the extramembraneous catalytic core and F(0) containing the membrane proton channel, linked together by a central stalk and a peripheral stalk. During catalysis, ATP synthesis in the catalytic domain of F(1) is coupled via a rotary mechanism of the central stalk subunits to proton translocation. This protein is part of the stalk that links CF(0) to CF(1). It either transmits conformational changes from CF(0) to CF(1) or is implicated in proton conduction. The protein is ATP synthase subunit delta of Streptococcus mutans serotype c (strain ATCC 700610 / UA159).